Here is a 436-residue protein sequence, read N- to C-terminus: UPF0597 protein YhaM (436 aa).

It belongs to the UPF0597 family.

This is UPF0597 protein YhaM from Escherichia coli O127:H6 (strain E2348/69 / EPEC).